The sequence spans 403 residues: 8-amino-7-oxononanoate synthase (403 aa).

Arginine 25 contributes to the substrate binding site. 112–113 (GY) is a binding site for pyridoxal 5'-phosphate. Histidine 137 lines the substrate pocket. Serine 182, histidine 210, and threonine 239 together coordinate pyridoxal 5'-phosphate. Lysine 242 carries the post-translational modification N6-(pyridoxal phosphate)lysine. Threonine 358 serves as a coordination point for substrate.

Belongs to the class-II pyridoxal-phosphate-dependent aminotransferase family. BioF subfamily. Homodimer. It depends on pyridoxal 5'-phosphate as a cofactor.

The enzyme catalyses 6-carboxyhexanoyl-[ACP] + L-alanine + H(+) = (8S)-8-amino-7-oxononanoate + holo-[ACP] + CO2. It functions in the pathway cofactor biosynthesis; biotin biosynthesis. Catalyzes the decarboxylative condensation of pimeloyl-[acyl-carrier protein] and L-alanine to produce 8-amino-7-oxononanoate (AON), [acyl-carrier protein], and carbon dioxide. The polypeptide is 8-amino-7-oxononanoate synthase (Marinomonas sp. (strain MWYL1)).